A 408-amino-acid polypeptide reads, in one-letter code: D-inositol 3-phosphate glycosyltransferase (408 aa).

Histidine 7 is a binding site for 1D-myo-inositol 3-phosphate. Residues 13–14 and glycine 21 each bind UDP-N-acetyl-alpha-D-glucosamine; that span reads QP. 1D-myo-inositol 3-phosphate contacts are provided by residues 18–23, lysine 76, tyrosine 109, threonine 133, and arginine 153; that span reads DAGGMN. UDP-N-acetyl-alpha-D-glucosamine-binding residues include arginine 227, lysine 232, and valine 288. Mg(2+) is bound by residues phenylalanine 297, arginine 298, and alanine 300. Residues glutamate 310 and glutamate 318 each coordinate UDP-N-acetyl-alpha-D-glucosamine. Threonine 324 provides a ligand contact to Mg(2+).

Belongs to the glycosyltransferase group 1 family. MshA subfamily. Homodimer.

It catalyses the reaction 1D-myo-inositol 3-phosphate + UDP-N-acetyl-alpha-D-glucosamine = 1D-myo-inositol 2-acetamido-2-deoxy-alpha-D-glucopyranoside 3-phosphate + UDP + H(+). Its function is as follows. Catalyzes the transfer of a N-acetyl-glucosamine moiety to 1D-myo-inositol 3-phosphate to produce 1D-myo-inositol 2-acetamido-2-deoxy-glucopyranoside 3-phosphate in the mycothiol biosynthesis pathway. The chain is D-inositol 3-phosphate glycosyltransferase from Paenarthrobacter aurescens (strain TC1).